The chain runs to 237 residues: MSQPIYKRILLKLSGEALQGEDGLGIDPAILDRMAVEIKELVEMGVEVSVVLGGGNLFRGAKLAKAGMNRVVGDHMGMLATVMNGLAMRDSLFRADVNAKLMSAFQLNGICDTYNWSEAIKMLREKRVVIFSAGTGNPFFTTDSTACLRGIEIEADVVLKATKVDGVYDCDPAKNPDAKLYKNLSYAEVIDKELKVMDLSAFTLARDHGMPIRVFNMGKPGALRQVVTGTEEGTTIC.

12–15 is a binding site for ATP; sequence KLSG. The tract at residues 20 to 25 is involved in allosteric activation by GTP; that stretch reads GEDGLG. Position 54 (Gly54) interacts with UMP. ATP is bound by residues Gly55 and Arg59. UMP-binding positions include Asp74 and 135 to 142; that span reads TGNPFFTT. ATP-binding residues include Thr162, Tyr168, and Asp171.

The protein belongs to the UMP kinase family. In terms of assembly, homohexamer.

The protein resides in the cytoplasm. It carries out the reaction UMP + ATP = UDP + ADP. It participates in pyrimidine metabolism; CTP biosynthesis via de novo pathway; UDP from UMP (UMPK route): step 1/1. Its activity is regulated as follows. Allosterically activated by GTP. Inhibited by UTP. In terms of biological role, catalyzes the reversible phosphorylation of UMP to UDP. The protein is Uridylate kinase (pyrH) of Haemophilus influenzae (strain ATCC 51907 / DSM 11121 / KW20 / Rd).